The primary structure comprises 608 residues: Serine/threonine-protein kinase SSN3 (608 aa).

Residues 1 to 72 (MSYSSASFRK…PGTVGTRTSI (72 aa)) are disordered. Residues 17–47 (SQPSQTTTTTTSANQPQSQSQQQPLQQSQQQ) are compositionally biased toward low complexity. Positions 49–59 (LHMKPNPHIPH) are enriched in basic residues. A Protein kinase domain is found at 104–492 (YQIMGYIAAG…ADQALLHPYF (389 aa)). ATP is bound by residues 110–118 (IAAGTYGKV) and K182. The active-site Proton acceptor is D307. The interval 523–608 (MTTAANNNNN…LPGGIRKKRG (86 aa)) is disordered. The segment covering 528-583 (NNNNNNNNNNNNNNNNNNNNNNNNNNNSGHQLSQQQNVQIQQVHQMQQQIHSQQLQ) has biased composition (low complexity).

It belongs to the protein kinase superfamily. CMGC Ser/Thr protein kinase family. CDC2/CDKX subfamily. As to quaternary structure, component of the SRB8-11 complex, a regulatory module of the Mediator complex. Requires Mg(2+) as cofactor.

It localises to the nucleus. It carries out the reaction L-seryl-[protein] + ATP = O-phospho-L-seryl-[protein] + ADP + H(+). The enzyme catalyses L-threonyl-[protein] + ATP = O-phospho-L-threonyl-[protein] + ADP + H(+). The catalysed reaction is [DNA-directed RNA polymerase] + ATP = phospho-[DNA-directed RNA polymerase] + ADP + H(+). In terms of biological role, component of the SRB8-11 complex. The SRB8-11 complex is a regulatory module of the Mediator complex which is itself involved in regulation of basal and activated RNA polymerase II-dependent transcription. The SRB8-11 complex may be involved in the transcriptional repression of a subset of genes regulated by Mediator. It may inhibit the association of the Mediator complex with RNA polymerase II to form the holoenzyme complex. The SRB8-11 complex phosphorylates the C-terminal domain (CTD) of the largest subunit of RNA polymerase II. This chain is Serine/threonine-protein kinase SSN3 (SSN3), found in Candida albicans (strain SC5314 / ATCC MYA-2876) (Yeast).